The chain runs to 130 residues: Small ribosomal subunit protein uS9 (130 aa).

The protein belongs to the universal ribosomal protein uS9 family.

This is Small ribosomal subunit protein uS9 from Lawsonia intracellularis (strain PHE/MN1-00).